We begin with the raw amino-acid sequence, 110 residues long: Prothymosin alpha (110 aa).

At Met1 the chain carries N-acetylmethionine. Positions 1–110 (MSDAAVDTSS…TKKQKTDEDD (110 aa)) are disordered. An N-acetylserine; in Prothymosin alpha, N-terminally processed modification is found at Ser2. A Phosphoserine modification is found at Ser2. Thr8 is modified (phosphothreonine; by CK2). A phosphoserine mark is found at Ser9 and Ser10. A phosphothreonine; by CK2 mark is found at Thr13 and Thr14. Residues 13-31 (TTKDLKEKKEVVEEAENGR) show a composition bias toward basic and acidic residues. Residue Lys15 is modified to N6-acetyllysine; alternate. At Lys15 the chain carries N6-succinyllysine; alternate. Residues 32-41 (EAPANGNANE) are compositionally biased toward low complexity. Acidic residues predominate over residues 42–83 (ENGEQEADNEVDEEEEEGGEEEEEEEEGDGEEEDGDEDEEAE). A compositionally biased stretch (basic and acidic residues) spans 100 to 110 (DTKKQKTDEDD). Phosphothreonine is present on Thr101. Lys102 is subject to N6-acetyllysine; alternate. Lys102 is covalently cross-linked (Glycyl lysine isopeptide (Lys-Gly) (interchain with G-Cter in SUMO2); alternate). Thr106 is subject to Phosphothreonine.

Belongs to the pro/parathymosin family. As to quaternary structure, interacts with NUPR1; regulates apoptotic process. Post-translationally, covalently linked to a small RNA of about 20 nucleotides.

Its subcellular location is the nucleus. Prothymosin alpha may mediate immune function by conferring resistance to certain opportunistic infections. This Bos taurus (Bovine) protein is Prothymosin alpha (PTMA).